Consider the following 245-residue polypeptide: Octanoyltransferase (245 aa).

A BPL/LPL catalytic domain is found at 54-242 (QNAHEQVWLL…SFEQIFGPII (189 aa)). Substrate is bound by residues 93-100 (RGGEFTYH), 173-175 (AIG), and 186-188 (GVS). Residue Cys204 is the Acyl-thioester intermediate of the active site.

The protein belongs to the LipB family.

The protein localises to the cytoplasm. The enzyme catalyses octanoyl-[ACP] + L-lysyl-[protein] = N(6)-octanoyl-L-lysyl-[protein] + holo-[ACP] + H(+). The protein operates within protein modification; protein lipoylation via endogenous pathway; protein N(6)-(lipoyl)lysine from octanoyl-[acyl-carrier-protein]: step 1/2. Catalyzes the transfer of endogenously produced octanoic acid from octanoyl-acyl-carrier-protein onto the lipoyl domains of lipoate-dependent enzymes. Lipoyl-ACP can also act as a substrate although octanoyl-ACP is likely to be the physiological substrate. The chain is Octanoyltransferase from Bartonella henselae (strain ATCC 49882 / DSM 28221 / CCUG 30454 / Houston 1) (Rochalimaea henselae).